Here is a 184-residue protein sequence, read N- to C-terminus: Ribosome maturation factor RimP (184 aa).

This sequence belongs to the RimP family.

It localises to the cytoplasm. In terms of biological role, required for maturation of 30S ribosomal subunits. The protein is Ribosome maturation factor RimP of Zymomonas mobilis subsp. mobilis (strain ATCC 31821 / ZM4 / CP4).